A 427-amino-acid chain; its full sequence is Glutamate-1-semialdehyde 2,1-aminomutase (427 aa).

The residue at position 267 (Lys-267) is an N6-(pyridoxal phosphate)lysine.

Belongs to the class-III pyridoxal-phosphate-dependent aminotransferase family. HemL subfamily. In terms of assembly, homodimer. Pyridoxal 5'-phosphate serves as cofactor.

It localises to the cytoplasm. It carries out the reaction (S)-4-amino-5-oxopentanoate = 5-aminolevulinate. It participates in porphyrin-containing compound metabolism; protoporphyrin-IX biosynthesis; 5-aminolevulinate from L-glutamyl-tRNA(Glu): step 2/2. The chain is Glutamate-1-semialdehyde 2,1-aminomutase from Geobacter metallireducens (strain ATCC 53774 / DSM 7210 / GS-15).